The chain runs to 409 residues: Killer cell lectin-like receptor subfamily G member 2 (409 aa).

Residues 1 to 120 form a disordered region; the sequence is MEESWEAAPG…GAEPAPSAWA (120 aa). Low complexity predominate over residues 41–53; sequence PEGPESSPSPAGA. Over residues 72–81 the composition is skewed to pro residues; the sequence is SPRPGSPRVP. A compositionally biased stretch (low complexity) spans 104 to 120; sequence PRNGEAPGAEPAPSAWA. The residue at position 158 (serine 158) is a Phosphoserine. The segment at 193 to 216 is disordered; it reads TESGCDAEGRASPAEGSAGSPGSP. The segment covering 202-216 has biased composition (low complexity); it reads RASPAEGSAGSPGSP. Residues 263–283 traverse the membrane as a helical segment; that stretch reads WALAFMAVLLAVSGVVIVVLA. The C-type lectin domain occupies 300 to 405; sequence SEEHCYYFSA…CSTPRPWVCA (106 aa). Disulfide bonds link cysteine 321/cysteine 404 and cysteine 383/cysteine 396.

It localises to the membrane. The chain is Killer cell lectin-like receptor subfamily G member 2 (KLRG2) from Homo sapiens (Human).